The chain runs to 177 residues: Alkyl hydroperoxide reductase AhpD (177 aa).

C130 functions as the Proton donor in the catalytic mechanism. A disulfide bridge links C130 with C133. The active-site Cysteine sulfenic acid (-SOH) intermediate is the C133.

It belongs to the AhpD family. In terms of assembly, homotrimer.

It catalyses the reaction N(6)-[(R)-dihydrolipoyl]-L-lysyl-[lipoyl-carrier protein] + a hydroperoxide = N(6)-[(R)-lipoyl]-L-lysyl-[lipoyl-carrier protein] + an alcohol + H2O. Antioxidant protein with alkyl hydroperoxidase activity. Required for the reduction of the AhpC active site cysteine residues and for the regeneration of the AhpC enzyme activity. In Corynebacterium aurimucosum (strain ATCC 700975 / DSM 44827 / CIP 107346 / CN-1) (Corynebacterium nigricans), this protein is Alkyl hydroperoxide reductase AhpD.